Consider the following 73-residue polypeptide: Neuropeptide-like protein 29 (73 aa).

The N-terminal stretch at methionine 1–alanine 22 is a signal peptide. A tyrosine amide mark is found at tyrosine 29, tyrosine 39, tyrosine 47, tyrosine 55, and tyrosine 63. Tryptophan 71 carries the post-translational modification Tryptophan amide.

Belongs to the YARP (YGGW-amide related peptide) family. Weakly or not expressed in absence of infection. Upon infection by D.coniospora, it is expressed in hypoderm. Also expressed in perivulval cells when D.coniospora spores adhere to this region. Expressed in hypodermis upon physical injury.

The protein resides in the secreted. Antimicrobial peptides that have antibacterial activity against the Gram-negative bacteria S.marcescens. Has antifungal activity against D.coniospora. May play a role in response to physical injury and osmotic stress. Through the neuropeptide receptor nlp-29, induces sleep upon activation of the innate immune response to molting and injury to the adult epidermis. In Caenorhabditis elegans, this protein is Neuropeptide-like protein 29.